We begin with the raw amino-acid sequence, 181 residues long: Major urinary protein (181 aa).

The first 19 residues, 1-19 (MKLLLLLLCLGLTLVCGHA), serve as a signal peptide directing secretion. An N-linked (GlcNAc...) asparagine glycan is attached at Asn54. Cys83 and Cys176 are joined by a disulfide.

It belongs to the calycin superfamily. Lipocalin family. Abundant in the urine of adult male rats but absent from that of females.

It localises to the cytoplasm. It is found in the cytosol. Its subcellular location is the secreted. Functionally, major urinary proteins (Mups) bind and release pheromones. They may also protect pheromones from oxidation. In this context, they play a role in the regulation of social behaviors, such as aggression, mating, pup-suckling, territory establishment and dominance. Acts as a kairomone, detected by the prey vomeronasal organ and inducing fear reactions in mice. The chain is Major urinary protein from Rattus norvegicus (Rat).